We begin with the raw amino-acid sequence, 205 residues long: uncharacterized protein (205 aa).

The disordered stretch occupies residues 72–114 (ARVSPYGYESDSENEEYTRISSATSSNVLTDSPTTTQDDPTGR). Polar residues predominate over residues 90-100 (RISSATSSNVL). Positions 101–110 (TDSPTTTQDD) are enriched in low complexity.

This is an uncharacterized protein from Equus caballus (Horse).